Here is a 337-residue protein sequence, read N- to C-terminus: Carbonic anhydrase 14 (337 aa).

A signal peptide spans 1–15; it reads MLFSALLLEVIWILA. At 16–290 the chain is on the extracellular side; the sequence is ADGGQHWTYE…AGSSYTTGEM (275 aa). Residues 20 to 278 enclose the Alpha-carbonic anhydrase domain; the sequence is QHWTYEGPHG…LNQRMVFASF (259 aa). Cysteines 40 and 221 form a disulfide. Catalysis depends on H84, which acts as the Proton donor/acceptor. H109, H111, and H135 together coordinate Zn(2+). Residue N213 is glycosylated (N-linked (GlcNAc...) asparagine). 217 to 218 is a binding site for substrate; that stretch reads TT. The helical transmembrane segment at 291-311 threads the bilayer; the sequence is LSLGVGILVGCLCLLLAVYFI. At 312-337 the chain is on the cytoplasmic side; it reads ARKIRKKRLENRKSVVFTSAQATTEA. Residue S325 is modified to Phosphoserine.

The protein belongs to the alpha-carbonic anhydrase family. Zn(2+) is required as a cofactor. In terms of tissue distribution, high expression in all parts of the central nervous system and lower expression in adult liver, heart, small intestine, colon, kidney, urinary bladder and skeletal muscle.

The protein localises to the membrane. It catalyses the reaction hydrogencarbonate + H(+) = CO2 + H2O. Its activity is regulated as follows. Activated by histamine, L-adrenaline, L- and D-histidine, and L- and D-phenylalanine. Inhibited by coumarins, saccharin, sulfonamide derivatives such as acetazolamide (AZA) and Foscarnet (phosphonoformate trisodium salt). Reversible hydration of carbon dioxide. The polypeptide is Carbonic anhydrase 14 (CA14) (Homo sapiens (Human)).